We begin with the raw amino-acid sequence, 430 residues long: Mothers against decapentaplegic homolog 9 (430 aa).

One can recognise an MH1 domain in the interval 16 to 140; sequence PAVKRLLGWK…YRRVETPVLP (125 aa). Cys-68, Cys-113, Cys-125, and His-130 together coordinate Zn(2+). Positions 186-222 are disordered; sequence CPAPPSSPGHVFPQSPCPTSYPHSPGSPSESDSPYQH. The span at 202-221 shows a compositional bias: polar residues; the sequence is CPTSYPHSPGSPSESDSPYQ. An MH2 domain is found at 236-430; sequence WCSVAYYELN…SPHNPISSVS (195 aa).

The protein belongs to the dwarfin/SMAD family. Interaction with the co-SMAD SMAD4. Interacts with PEBP2-alpha subunit. Interacts with RANBP3L. Phosphorylated on serine by BMP (bone morphogenetic proteins) type 1 receptor kinase and activin type I receptor-like kinases (ALK-2, ALK-3 and ALK-6).

It is found in the cytoplasm. It localises to the nucleus. Functionally, transcriptional modulator activated by BMP (bone morphogenetic proteins) type 1 receptor kinase. SMAD9 is a receptor-regulated SMAD (R-SMAD). Has been shown to be activated by activin type I receptor-like kinases (ALK-2, ALK-3, ALK-6) which stimulate heteromerization between SMAD9 and SMAD4. May play a role in osteoblast differentiation and maturation. In Mus musculus (Mouse), this protein is Mothers against decapentaplegic homolog 9 (Smad9).